We begin with the raw amino-acid sequence, 200 residues long: Large ribosomal subunit protein uL4 (200 aa).

The segment at G38–R68 is disordered. Over residues G54–G65 the composition is skewed to basic residues.

The protein belongs to the universal ribosomal protein uL4 family. Part of the 50S ribosomal subunit.

Functionally, one of the primary rRNA binding proteins, this protein initially binds near the 5'-end of the 23S rRNA. It is important during the early stages of 50S assembly. It makes multiple contacts with different domains of the 23S rRNA in the assembled 50S subunit and ribosome. Its function is as follows. Forms part of the polypeptide exit tunnel. This is Large ribosomal subunit protein uL4 from Pseudomonas savastanoi pv. phaseolicola (strain 1448A / Race 6) (Pseudomonas syringae pv. phaseolicola (strain 1448A / Race 6)).